We begin with the raw amino-acid sequence, 234 residues long: Response regulator RppA (234 aa).

Positions 2 to 118 (RILLVEDETD…ELLARLRALQ (117 aa)) constitute a Response regulatory domain. Asp53 carries the 4-aspartylphosphate modification. The segment at residues 126-232 (PQILTLGNFS…VPGQGYRFTL (107 aa)) is a DNA-binding region (ompR/PhoB-type).

As to quaternary structure, interacts with histidine kinase Hik2; may accept phosphate from Hik2.

Functionally, member of two-component regulatory system RppA/RppB, involved in the establishment of the appropriate stoichiometry between the 2 photosystems. It senses changes in the plastoquinone (PQ) redox poise. Another group shows this two-component pair, renamed NrsR/NrsS, controls the nickel-dependent expression of the nrsBACD operon; they suggest the photosystem-related activities seen earlier are due to the expression of NrsS (RppB) in the absence of its natural substrate NrsR (RppA). May accept phosphate from Hik2 in a possible Hik2/RppA two-component system. This Synechocystis sp. (strain ATCC 27184 / PCC 6803 / Kazusa) protein is Response regulator RppA.